A 207-amino-acid chain; its full sequence is ATP synthase subunit 5, mitochondrial (207 aa).

Belongs to the ATPase delta chain family. In terms of assembly, F-type ATPases have 2 components, CF(1) - the catalytic core - and CF(0) - the membrane proton channel. CF(1) has five subunits: alpha(3), beta(3), gamma(1), delta(1), epsilon(1). CF(0) has three main subunits: a, b and c.

The protein localises to the mitochondrion. Its subcellular location is the mitochondrion inner membrane. In terms of biological role, mitochondrial membrane ATP synthase (F(1)F(0) ATP synthase or Complex V) produces ATP from ADP in the presence of a proton gradient across the membrane which is generated by electron transport complexes of the respiratory chain. F-type ATPases consist of two structural domains, F(1) - containing the extramembraneous catalytic core and F(0) - containing the membrane proton channel, linked together by a central stalk and a peripheral stalk. During catalysis, ATP synthesis in the catalytic domain of F(1) is coupled via a rotary mechanism of the central stalk subunits to proton translocation. Part of the complex F(0) domain and the peripheric stalk, which acts as a stator to hold the catalytic alpha(3)beta(3) subcomplex and subunit a/ATP6 static relative to the rotary elements. This Candida glabrata (strain ATCC 2001 / BCRC 20586 / JCM 3761 / NBRC 0622 / NRRL Y-65 / CBS 138) (Yeast) protein is ATP synthase subunit 5, mitochondrial (ATP5).